The sequence spans 2710 residues: Serine/threonine-protein kinase ATR (2710 aa).

Positions 1647-2257 (TLAKASFRCQ…LWMMAAVSKS (611 aa)) constitute an FAT domain. A PI3K/PI4K catalytic domain is found at 2368–2680 (IADDAEILNS…GVNAAPSLPL (313 aa)). The segment at 2374-2380 (ILNSLQK) is G-loop. The tract at residues 2545–2553 (GLGDRHGEN) is catalytic loop. The tract at residues 2565-2589 (HVDFSCLFDKGLLLEKPEVVPFRFT) is activation loop. In terms of domain architecture, FATC spans 2678–2710 (LPLSVEGQARRLIAEAVSHSNLGKMYVWWMAWF).

This sequence belongs to the PI3/PI4-kinase family. ATM subfamily.

The protein resides in the nucleus. It carries out the reaction L-seryl-[protein] + ATP = O-phospho-L-seryl-[protein] + ADP + H(+). The enzyme catalyses L-threonyl-[protein] + ATP = O-phospho-L-threonyl-[protein] + ADP + H(+). Probable serine/threonine kinase. Seems to play a central role in cell-cycle regulation by transmitting DNA damage signals to downstream effectors of cell-cycle progression. May recognize the substrate consensus sequence [ST]-Q and phosphorylate histone variant H2AX to form H2AXS139ph at sites of DNA damage, thereby regulating DNA damage response mechanism. The chain is Serine/threonine-protein kinase ATR from Oryza sativa subsp. japonica (Rice).